Reading from the N-terminus, the 482-residue chain is MKFIIKLFPEITIKSQTVRLRFIKILASNIRNVLKTLGDNIAVVRHWDNIEVRTKDENLGVQICDALTRIPGIHHILQVEEREFRDMHHIFEQAYEAYGELLHNKTFCVRVKRRGKHQFTSNEVERYVGGGLNQHIESAKVKLNHPDVTVNLEIDQDVLILVKARYEGIGGFPIGTQEDVLSLISGGFDSGVSSYMLMRRGCRVHYCFFNLGGSAHEIGVKQVAHYLWNRFGSSHKVRFVAVDFEPVVAEILEKVDDGQMGVVLKRMMVRAASKVAERYGVQAIVTGEALGQVSSQTLTNLRLIDNASDTLILRPLISHDKEHIIRLAREIGTEDFARTMPEFCGVISKSPTVKAVKAKIEAEEANFDFNILEKVVSEAQNVDIRQIAEQSSEQVVEIETVTAFAPTDVLLDIRSPDEQDDRPLQLNGVEIKSLPFYKLSSQFGDLPKEKTYLLYCERGVMSRLQALYLSEQGFDNVKVYRP.

Positions 61–165 (VQICDALTRI…QDVLILVKAR (105 aa)) constitute a THUMP domain. Residues 183 to 184 (LI), K265, G287, and Q296 each bind ATP. C344 and C456 form a disulfide bridge. The Rhodanese domain occupies 404 to 482 (FAPTDVLLDI…GFDNVKVYRP (79 aa)). Catalysis depends on C456, which acts as the Cysteine persulfide intermediate.

Belongs to the ThiI family.

It is found in the cytoplasm. It carries out the reaction [ThiI sulfur-carrier protein]-S-sulfanyl-L-cysteine + a uridine in tRNA + 2 reduced [2Fe-2S]-[ferredoxin] + ATP + H(+) = [ThiI sulfur-carrier protein]-L-cysteine + a 4-thiouridine in tRNA + 2 oxidized [2Fe-2S]-[ferredoxin] + AMP + diphosphate. The catalysed reaction is [ThiS sulfur-carrier protein]-C-terminal Gly-Gly-AMP + S-sulfanyl-L-cysteinyl-[cysteine desulfurase] + AH2 = [ThiS sulfur-carrier protein]-C-terminal-Gly-aminoethanethioate + L-cysteinyl-[cysteine desulfurase] + A + AMP + 2 H(+). It functions in the pathway cofactor biosynthesis; thiamine diphosphate biosynthesis. Its function is as follows. Catalyzes the ATP-dependent transfer of a sulfur to tRNA to produce 4-thiouridine in position 8 of tRNAs, which functions as a near-UV photosensor. Also catalyzes the transfer of sulfur to the sulfur carrier protein ThiS, forming ThiS-thiocarboxylate. This is a step in the synthesis of thiazole, in the thiamine biosynthesis pathway. The sulfur is donated as persulfide by IscS. The protein is tRNA sulfurtransferase of Photorhabdus laumondii subsp. laumondii (strain DSM 15139 / CIP 105565 / TT01) (Photorhabdus luminescens subsp. laumondii).